The sequence spans 460 residues: ATP synthase subunit beta (460 aa).

150 to 157 (GGAGVGKT) lines the ATP pocket.

It belongs to the ATPase alpha/beta chains family. As to quaternary structure, F-type ATPases have 2 components, CF(1) - the catalytic core - and CF(0) - the membrane proton channel. CF(1) has five subunits: alpha(3), beta(3), gamma(1), delta(1), epsilon(1). CF(0) has three main subunits: a(1), b(2) and c(9-12). The alpha and beta chains form an alternating ring which encloses part of the gamma chain. CF(1) is attached to CF(0) by a central stalk formed by the gamma and epsilon chains, while a peripheral stalk is formed by the delta and b chains.

Its subcellular location is the cell inner membrane. It catalyses the reaction ATP + H2O + 4 H(+)(in) = ADP + phosphate + 5 H(+)(out). Produces ATP from ADP in the presence of a proton gradient across the membrane. The catalytic sites are hosted primarily by the beta subunits. In Salmonella agona (strain SL483), this protein is ATP synthase subunit beta.